Here is a 434-residue protein sequence, read N- to C-terminus: Putative B3 domain-containing protein Os04g0347400 (434 aa).

3 DNA-binding regions (TF-B3) span residues 27–124 (SFHK…FDTT), 150–246 (KPQF…FGIN), and 326–432 (WIKK…DRVE).

It is found in the nucleus. The sequence is that of Putative B3 domain-containing protein Os04g0347400 from Oryza sativa subsp. japonica (Rice).